Here is a 143-residue protein sequence, read N- to C-terminus: Nucleoside diphosphate kinase (143 aa).

Residues K11, F59, R87, T93, R104, and N114 each contribute to the ATP site. The active-site Pros-phosphohistidine intermediate is the H117.

The protein belongs to the NDK family. In terms of assembly, homotetramer. The cofactor is Mg(2+).

It localises to the cytoplasm. It catalyses the reaction a 2'-deoxyribonucleoside 5'-diphosphate + ATP = a 2'-deoxyribonucleoside 5'-triphosphate + ADP. The catalysed reaction is a ribonucleoside 5'-diphosphate + ATP = a ribonucleoside 5'-triphosphate + ADP. Functionally, major role in the synthesis of nucleoside triphosphates other than ATP. The ATP gamma phosphate is transferred to the NDP beta phosphate via a ping-pong mechanism, using a phosphorylated active-site intermediate. This is Nucleoside diphosphate kinase from Escherichia coli O81 (strain ED1a).